Consider the following 45-residue polypeptide: FKBP-type peptidyl-prolyl cis-trans isomerase, chloroplastic (45 aa).

This sequence belongs to the FKBP-type PPIase family. As to expression, expressed in leaves, but not in roots.

Its subcellular location is the plastid. It is found in the chloroplast thylakoid lumen. The catalysed reaction is [protein]-peptidylproline (omega=180) = [protein]-peptidylproline (omega=0). Its function is as follows. PPIases accelerate the folding of proteins. It catalyzes the cis-trans isomerization of proline imidic peptide bonds in oligopeptides. The protein is FKBP-type peptidyl-prolyl cis-trans isomerase, chloroplastic of Vicia faba (Broad bean).